Reading from the N-terminus, the 440-residue chain is Phosphatidylcholine-sterol acyltransferase (440 aa).

An N-terminal signal peptide occupies residues methionine 1–proline 24. Residue asparagine 44 is glycosylated (N-linked (GlcNAc...) asparagine). Cysteines 74 and 98 form a disulfide. The N-linked (GlcNAc...) asparagine glycan is linked to asparagine 108. Serine 205 acts as the Nucleophile in catalysis. The N-linked (GlcNAc...) asparagine glycan is linked to asparagine 296. Cysteines 337 and 380 form a disulfide. Residues aspartate 369 and histidine 401 each act as charge relay system in the active site. Asparagine 408 is a glycosylation site (N-linked (GlcNAc...) asparagine).

This sequence belongs to the AB hydrolase superfamily. Lipase family. In terms of tissue distribution, most abundant in liver and cerebellum.

It is found in the secreted. The catalysed reaction is a sterol + a 1,2-diacyl-sn-glycero-3-phosphocholine = a sterol ester + a 1-acyl-sn-glycero-3-phosphocholine. With respect to regulation, APOA1 is the most potent activator in plasma. Also activated by APOE, APOC1 and APOA4. In terms of biological role, central enzyme in the extracellular metabolism of plasma lipoproteins. Synthesized mainly in the liver and secreted into plasma where it converts cholesterol and phosphatidylcholines (lecithins) to cholesteryl esters and lysophosphatidylcholines on the surface of high and low density lipoproteins (HDLs and LDLs). The cholesterol ester is then transported back to the liver. Has a preference for plasma 16:0-18:2 or 18:O-18:2 phosphatidylcholines. Also produced in the brain by primary astrocytes, and esterifies free cholesterol on nascent APOE-containing lipoproteins secreted from glia and influences cerebral spinal fluid (CSF) APOE- and APOA1 levels. Together with APOE and the cholesterol transporter ABCA1, plays a key role in the maturation of glial-derived, nascent lipoproteins. Required for remodeling high-density lipoprotein particles into their spherical forms. This is Phosphatidylcholine-sterol acyltransferase (LCAT) from Papio anubis (Olive baboon).